A 137-amino-acid polypeptide reads, in one-letter code: Universal stress protein in QAH/OAS sulfhydrylase 3'region (137 aa).

The protein belongs to the universal stress protein A family.

The sequence is that of Universal stress protein in QAH/OAS sulfhydrylase 3'region from Thermus aquaticus.